Here is a 368-residue protein sequence, read N- to C-terminus: Glycine betaine monooxygenase reductase subunit (368 aa).

Residues 16 to 119 enclose the FAD-binding FR-type domain; the sequence is NGRHNVRCVK…HGPVGDFNVI (104 aa). Positions 284-368 constitute a 2Fe-2S ferredoxin-type domain; it reads LQVEFSNSGK…TPKSHVAIEF (85 aa). The [2Fe-2S] cluster site is built by C318, C323, C326, and C356.

In the N-terminal section; belongs to the FAD-binding oxidoreductase type 6 family. In terms of assembly, monomer. The system is composed of an oxygenase subunit (BmoA) and a reductase subunit (BmoB). Maximal specific activity is obtained when the ratio of BmoA to BmoB is 5:1. It depends on FAD as a cofactor. [2Fe-2S] cluster is required as a cofactor.

It catalyses the reaction glycine betaine + NADH + O2 + H(+) = N,N-dimethylglycine + formaldehyde + NAD(+) + H2O. Functionally, involved in degradation of glycine betaine. Part of a Rieske-type oxygenase system that catalyzes the conversion of glycine betaine (GB) to dimethylglycine (DMG). This subunit is the ferredoxin reductase component of the system. NADH is the preferred electron donor. The protein is Glycine betaine monooxygenase reductase subunit of Chromohalobacter salexigens (strain ATCC BAA-138 / DSM 3043 / CIP 106854 / NCIMB 13768 / 1H11).